A 272-amino-acid chain; its full sequence is HMP-PP phosphatase (272 aa).

The Nucleophile role is filled by aspartate 8. Mg(2+) contacts are provided by aspartate 8, aspartate 10, and aspartate 212.

The protein belongs to the HAD-like hydrolase superfamily. Cof family. Requires Mg(2+) as cofactor.

The catalysed reaction is 4-amino-2-methyl-5-(diphosphooxymethyl)pyrimidine + H2O = 4-amino-2-methyl-5-(phosphooxymethyl)pyrimidine + phosphate + H(+). Catalyzes the hydrolysis of 4-amino-2-methyl-5-hydroxymethylpyrimidine pyrophosphate (HMP-PP) to 4-amino-2-methyl-5-hydroxymethylpyrimidine phosphate (HMP-P). The chain is HMP-PP phosphatase from Klebsiella pneumoniae (strain 342).